Reading from the N-terminus, the 283-residue chain is Large ribosomal subunit protein uL2 (283 aa).

Disordered stretches follow at residues 1 to 59 (MSIK…GGHK) and 222 to 283 (RGVA…TGGQ).

Belongs to the universal ribosomal protein uL2 family. As to quaternary structure, part of the 50S ribosomal subunit. Forms a bridge to the 30S subunit in the 70S ribosome.

In terms of biological role, one of the primary rRNA binding proteins. Required for association of the 30S and 50S subunits to form the 70S ribosome, for tRNA binding and peptide bond formation. It has been suggested to have peptidyltransferase activity; this is somewhat controversial. Makes several contacts with the 16S rRNA in the 70S ribosome. This chain is Large ribosomal subunit protein uL2, found in Salinibacter ruber (strain DSM 13855 / M31).